An 884-amino-acid chain; its full sequence is Probable ribonuclease ZC3H12C (884 aa).

A disordered region spans residues 66–108 (KPTMDTVNSGKEGKGVSEENVSSGDSEGSTSSDHESEQLSSLS). Residues 87–96 (SSGDSEGSTS) show a composition bias toward low complexity. Ser231 carries the post-translational modification Phosphoserine. The 156-residue stretch at 246-401 (LRPVVIDGSN…LGRHGPSLDN (156 aa)) folds into the RNase NYN domain. The segment at 411–436 (EHKKQPCPYGKKCTYGHKCKYYHPER) adopts a C3H1-type zinc-finger fold. The segment covering 456-478 (AAKTTNEGGLVKSNSVPCSTKAD) has biased composition (polar residues). Disordered regions lie at residues 456-548 (AAKT…SGVH), 716-739 (VGAR…KAPH), and 755-776 (SRLY…EGLG). Residues 500–516 (VYQDIEEKLPTKNKLET) are compositionally biased toward basic and acidic residues. Residues 518–543 (SVPSLVSIPATSTAKPQSTTPLSNGL) show a composition bias toward polar residues.

This sequence belongs to the ZC3H12 family. It depends on Mg(2+) as a cofactor.

May function as RNase and regulate the levels of target RNA species. This Mus musculus (Mouse) protein is Probable ribonuclease ZC3H12C (Zc3h12c).